We begin with the raw amino-acid sequence, 178 residues long: MSKAGTKITFFEDKNFQGRHYDSDCDCADFHMYLSRCNSIRVEGGTWAVYERPNFAGYMYILPRGEYPEYQHWMGLNDRLSSCRAVHLSSGGQYKLQIFEKGDFNGQMHETTEDCPSIMEQFHMREVHSCKVLEGAWIFYELPNYRGRQYLLDKKEYRKPVDWGAASPAVQSFRRIVE.

S2 is modified (N-acetylserine). The N-terminal arm stretch occupies residues 2 to 5; it reads SKAG. Beta/gamma crystallin 'Greek key' domains follow at residues 6 to 44 and 45 to 87; these read TKITFFEDKNFQGRHYDSDCDCADFHMYLSRCNSIRVEG and GTWA…RAVH. Positions 88–93 are connecting peptide; it reads LSSGGQ. Beta/gamma crystallin 'Greek key' domains lie at 94 to 134 and 135 to 177; these read YKLQ…KVLE and GAWI…RRIV.

It belongs to the beta/gamma-crystallin family. As to quaternary structure, monomer.

Its function is as follows. Crystallins are the dominant structural components of the vertebrate eye lens. This Bos taurus (Bovine) protein is Gamma-crystallin S (CRYGS).